Reading from the N-terminus, the 423-residue chain is Kynurenine--oxoglutarate transaminase 1 (423 aa).

Glycine 36 contacts substrate. Lysine 82 is modified (N6-succinyllysine). Asparagine 185 contributes to the substrate binding site. At lysine 247 the chain carries N6-(pyridoxal phosphate)lysine. Arginine 398 contacts substrate.

It belongs to the class-I pyridoxal-phosphate-dependent aminotransferase family. As to quaternary structure, homodimer. It depends on pyridoxal 5'-phosphate as a cofactor. Detected in kidney.

The protein localises to the cytoplasm. The protein resides in the cytosol. It localises to the mitochondrion matrix. It carries out the reaction L-kynurenine + 2-oxoglutarate = kynurenate + L-glutamate + H2O. It catalyses the reaction 3-phenylpyruvate + L-glutamine = 2-oxoglutaramate + L-phenylalanine. The catalysed reaction is an S-substituted L-cysteine + H2O = a thiol + pyruvate + NH4(+). The protein operates within amino-acid degradation; L-kynurenine degradation; kynurenate from L-kynurenine: step 1/2. With respect to regulation, inhibited by aminooxyacetate (in vitro). Functionally, catalyzes the irreversible transamination of the L-tryptophan metabolite L-kynurenine to form kynurenic acid (KA), an intermediate in the tryptophan catabolic pathway which is also a broad spectrum antagonist of the three ionotropic excitatory amino acid receptors among others. Metabolizes the cysteine conjugates of certain halogenated alkenes and alkanes to form reactive metabolites. Catalyzes the beta-elimination of S-conjugates and Se-conjugates of L-(seleno)cysteine, resulting in the cleavage of the C-S or C-Se bond. The protein is Kynurenine--oxoglutarate transaminase 1 of Rattus norvegicus (Rat).